Consider the following 444-residue polypeptide: Phosphoglucosamine mutase (444 aa).

Serine 102 (phosphoserine intermediate) is an active-site residue. 4 residues coordinate Mg(2+): serine 102, aspartate 241, aspartate 243, and aspartate 245. The residue at position 102 (serine 102) is a Phosphoserine.

The protein belongs to the phosphohexose mutase family. The cofactor is Mg(2+). In terms of processing, activated by phosphorylation.

It catalyses the reaction alpha-D-glucosamine 1-phosphate = D-glucosamine 6-phosphate. In terms of biological role, catalyzes the conversion of glucosamine-6-phosphate to glucosamine-1-phosphate. The polypeptide is Phosphoglucosamine mutase (Acidovorax ebreus (strain TPSY) (Diaphorobacter sp. (strain TPSY))).